The following is a 20-amino-acid chain: 35 kDa cell wall protein (20 aa).

The protein localises to the secreted. Its subcellular location is the cell wall. This chain is 35 kDa cell wall protein, found in Phaseolus vulgaris (Kidney bean).